A 291-amino-acid polypeptide reads, in one-letter code: Phosphatidylglycerol--prolipoprotein diacylglyceryl transferase (291 aa).

7 helical membrane-spanning segments follow: residues 21-41, 60-80, 96-116, 130-150, 198-218, 225-245, and 260-280; these read VSLH…MWLA, LLYA…VLFY, WDGG…MIWF, FIAP…FING, SQLY…NLFI, GAVS…VEFF, and ISMG…MMIW. Arg-143 is a binding site for a 1,2-diacyl-sn-glycero-3-phospho-(1'-sn-glycerol).

Belongs to the Lgt family.

The protein localises to the cell inner membrane. It carries out the reaction L-cysteinyl-[prolipoprotein] + a 1,2-diacyl-sn-glycero-3-phospho-(1'-sn-glycerol) = an S-1,2-diacyl-sn-glyceryl-L-cysteinyl-[prolipoprotein] + sn-glycerol 1-phosphate + H(+). The protein operates within protein modification; lipoprotein biosynthesis (diacylglyceryl transfer). In terms of biological role, catalyzes the transfer of the diacylglyceryl group from phosphatidylglycerol to the sulfhydryl group of the N-terminal cysteine of a prolipoprotein, the first step in the formation of mature lipoproteins. The sequence is that of Phosphatidylglycerol--prolipoprotein diacylglyceryl transferase from Cronobacter sakazakii (strain ATCC BAA-894) (Enterobacter sakazakii).